An 843-amino-acid chain; its full sequence is Translation initiation factor IF-2 (843 aa).

Residues 94–259 (QRSPEEIEAE…AHGFQSPTGP (166 aa)) are disordered. Over residues 96 to 135 (SPEEIEAERKREMDERRAVENAARQKAEEEAKRRAEEDAR) the composition is skewed to basic and acidic residues. Positions 136–177 (NQPAAGQPASAPAQPVAAAEPVREAPAPAAAAPAPASAAPSA) are enriched in low complexity. 2 stretches are compositionally biased toward basic and acidic residues: residues 178 to 219 (DARK…EKAP) and 227 to 236 (TTDEESDSFR). The segment covering 237 to 250 (RGGRGKSRLKKRNA) has biased composition (basic residues). The tr-type G domain maps to 343–512 (SRAPVVTVMG…LLQAEVLELK (170 aa)). Positions 352–359 (GHVDHGKT) are G1. 352–359 (GHVDHGKT) provides a ligand contact to GTP. The tract at residues 377–381 (GITQH) is G2. The interval 398–401 (DTPG) is G3. GTP is bound by residues 398–402 (DTPGH) and 452–455 (NKID). Residues 452 to 455 (NKID) are G4. A G5 region spans residues 488–490 (SAK).

It belongs to the TRAFAC class translation factor GTPase superfamily. Classic translation factor GTPase family. IF-2 subfamily.

The protein localises to the cytoplasm. In terms of biological role, one of the essential components for the initiation of protein synthesis. Protects formylmethionyl-tRNA from spontaneous hydrolysis and promotes its binding to the 30S ribosomal subunits. Also involved in the hydrolysis of GTP during the formation of the 70S ribosomal complex. This Pseudomonas savastanoi pv. phaseolicola (strain 1448A / Race 6) (Pseudomonas syringae pv. phaseolicola (strain 1448A / Race 6)) protein is Translation initiation factor IF-2.